Here is a 607-residue protein sequence, read N- to C-terminus: UvrABC system protein C (607 aa).

Positions 12–91 (DSPGVYLYKD…IKRYRPRYNI (80 aa)) constitute a GIY-YIG domain. The region spanning 200-235 (ENLIKKLKKEMAIASDNLEFERAAKLRDQILALEKI) is the UVR domain.

This sequence belongs to the UvrC family. In terms of assembly, interacts with UvrB in an incision complex.

It is found in the cytoplasm. Functionally, the UvrABC repair system catalyzes the recognition and processing of DNA lesions. UvrC both incises the 5' and 3' sides of the lesion. The N-terminal half is responsible for the 3' incision and the C-terminal half is responsible for the 5' incision. The polypeptide is UvrABC system protein C (Carboxydothermus hydrogenoformans (strain ATCC BAA-161 / DSM 6008 / Z-2901)).